Reading from the N-terminus, the 1955-residue chain is Protocadherin-15 (1955 aa).

The signal sequence occupies residues 1 to 26; the sequence is MFRQFYLWTCLASGIILGSLFEICLG. Residues 27-1376 are Extracellular-facing; the sequence is QYDDDCKLAR…GESLGYTEGA (1350 aa). A disulfide bridge links C32 with C120. 11 Cadherin domains span residues 40–147, 148–265, 278–395, 396–509, 510–616, 617–717, 719–819, 820–926, 927–1035, 1037–1144, and 1145–1259; these read PATI…SPTF, KHES…GPMF, RPLT…SPYF, TMPS…TPTF, PEIS…PPRF, PQLM…APVF, PYLP…SPVF, TNST…PPVF, SKRI…IPRF, QEEY…PPVF, and QKKF…PPTL. N-linked (GlcNAc...) asparagine glycans are attached at residues N52, N97, and N201. 7 N-linked (GlcNAc...) asparagine glycosylation sites follow: N419, N559, N662, N724, N768, N821, and N851. N-linked (GlcNAc...) asparagine glycosylation is found at N1064, N1084, and N1175. Residues 1377 to 1397 form a helical membrane-spanning segment; that stretch reads LLALAFIIILCCIPAILVVLV. Residues 1398–1955 are Cytoplasmic-facing; the sequence is SYRQFKVRQA…KQSHSQSTSL (558 aa). A compositionally biased stretch (pro residues) spans 1426–1444; it reads VPAPAPVAAPPPPPPPPPG. Disordered regions lie at residues 1426–1446, 1601–1623, 1745–1766, and 1928–1955; these read VPAPAPVAAPPPPPPPPPGAH, QGTRQKAENENTGICTNKRGSSN, CPLPPPPPISPPSPPPAPAPLA, and ITSEQNKGSLNNIVEGTEKQSHSQSTSL. The segment covering 1928–1941 has biased composition (polar residues); sequence ITSEQNKGSLNNIV.

As to quaternary structure, antiparallel heterodimer with CDH23. Found in a complex with TMIE and LHFPL5. Interacts with LHFPL5/TMHS; this interaction is required for efficient localization to hair bundles. Interacts with MYO7A. Interacts with USH1G; this interaction may recruit USH1G to the plasma membrane. Interacts with TOMT. Isoforms CD1 and CD3 interact with TMC1 (via N-terminus) and TMC2 (via N-terminus). Expressed in brain, lung, kidney, spleen and testis. Found also in the inner and outer synaptic layers, and the nerve fiber layer in adult and fetal retinas. Found in the supporting cells, outer sulcus cells and spiral ganglion of fetal cochlea. Expressed in cytotoxic tumor-derived T- and NK-cell lines as well as biopsies of nasal NK/T-cell lymphomas. Not detected in normal or in vitro activated peripheral blood cells, CD4 or CD8 lymphocytes or NK cells. Isoform 3 is expressed in brain, heart, cerebellum and kidney. CD1 isoforms, such as isoform 1, have a limited pattern of expression and is detected in testis, retina and cochlea. CD2 isoforms, such as isoforms 4 and 5, are expressed in heart, kidney, thymus, spleen, testis, retina and cochlea. CD3 isoforms, such as isoform 6, are widely expressed.

The protein localises to the cell membrane. It localises to the secreted. Functionally, calcium-dependent cell-adhesion protein. Essential for maintenance of normal retinal and cochlear function. The sequence is that of Protocadherin-15 (PCDH15) from Homo sapiens (Human).